The sequence spans 248 residues: PGSPQKRAASPRKSPRKSPKKSPRKASASPRRKAKRARASTHPPVLEMVQAAITAMKERKGSSAAKIKSYMAANYRVDMNVLAPHVRRALRNGVASGALKQVTGTGASGRFRVGAVAKPKKAKKTSAAAKAKKAKAAAAKKARKAKAAAKRKAALAKKKAAAAKRKAAAKAKKAKKPKKKAAKKAKKPAKKSPKKAKKPAKKSPKKKKAKRSPKKAKKAAGKRKPAAKKARRSPRKAGKRRSPKKARK.

2 disordered regions span residues 1-46 and 115-248; these read PGSP…PPVL and AVAK…KARK. Residues 9 to 39 show a composition bias toward basic residues; that stretch reads ASPRKSPRKSPKKSPRKASASPRRKAKRARA. Positions 41–115 constitute an H15 domain; that stretch reads THPPVLEMVQ…GASGRFRVGA (75 aa). Basic residues predominate over residues 118–248; the sequence is KPKKAKKTSA…KRRSPKKARK (131 aa).

The protein belongs to the histone H1/H5 family. In terms of tissue distribution, sperm.

It localises to the nucleus. The protein localises to the chromosome. Its function is as follows. Histones H1 are necessary for the condensation of nucleosome chains into higher-order structures. This chain is Histone H1, gonadal, found in Parechinus angulosus (Angulate sea urchin).